Consider the following 266-residue polypeptide: Dihydropteroate synthase (266 aa).

The Pterin-binding domain occupies 12-260 (AAIMGILNVT…DVKANQDIVA (249 aa)). Asn19 is a binding site for Mg(2+). (7,8-dihydropterin-6-yl)methyl diphosphate-binding positions include Thr59, Asp93, Asn112, Asp176, Lys212, and 248-250 (RVH).

Belongs to the DHPS family. Homodimer or homotrimer. Requires Mg(2+) as cofactor.

It carries out the reaction (7,8-dihydropterin-6-yl)methyl diphosphate + 4-aminobenzoate = 7,8-dihydropteroate + diphosphate. It participates in cofactor biosynthesis; tetrahydrofolate biosynthesis; 7,8-dihydrofolate from 2-amino-4-hydroxy-6-hydroxymethyl-7,8-dihydropteridine diphosphate and 4-aminobenzoate: step 1/2. Catalyzes the condensation of para-aminobenzoate (pABA) with 6-hydroxymethyl-7,8-dihydropterin diphosphate (DHPt-PP) to form 7,8-dihydropteroate (H2Pte), the immediate precursor of folate derivatives. This is Dihydropteroate synthase (folP) from Streptococcus pyogenes serotype M18 (strain MGAS8232).